The chain runs to 743 residues: Threonine synthase-like 1 (743 aa).

K281 carries the post-translational modification N6-acetyllysine. K351 carries the post-translational modification N6-(pyridoxal phosphate)lysine.

Belongs to the threonine synthase family. It depends on pyridoxal 5'-phosphate as a cofactor.

The polypeptide is Threonine synthase-like 1 (THNSL1) (Macaca fascicularis (Crab-eating macaque)).